The primary structure comprises 766 residues: Transcription factor GTE4 (766 aa).

Disordered regions lie at residues 87–108, 234–262, and 388–412; these read GTNS…PGDD, RDTT…PMEE, and GDKL…GDVG. Over residues 238–250 the composition is skewed to polar residues; the sequence is DAQQPAGLTSDSA. The Bromo domain maps to 416 to 522; the sequence is GAGTKVFKNC…QIFEERWAVI (107 aa). 2 disordered regions span residues 544-606 and 687-766; these read TMRS…NKRD and ARAE…SDQT. A compositionally biased stretch (low complexity) spans 574–589; it reads PTTTPGRTPTSATPSG. One can recognise an NET domain in the interval 597–678; it reads PKANEPNKRD…NYKKGLSKKK (82 aa). The span at 736 to 766 shows a compositional bias: low complexity; that stretch reads SRSSSSSSSSSSSSSSDSDSDSSSSSGSDQT.

As to expression, ubiquitously expressed.

It localises to the nucleus. Involved in the activation and maintenance of cell division in the meristems and by this controls cell numbers in differentiated organs. Its action in cell cycle regulation may be directed through the RB-E2F pathway. This Arabidopsis thaliana (Mouse-ear cress) protein is Transcription factor GTE4 (GTE4).